Reading from the N-terminus, the 86-residue chain is Small ribosomal subunit protein bS20 (86 aa).

Residues 1 to 27 are disordered; sequence MANNKSAKKRAIQAEKRRQHNASRRSM.

It belongs to the bacterial ribosomal protein bS20 family.

Binds directly to 16S ribosomal RNA. This Vibrio vulnificus (strain CMCP6) protein is Small ribosomal subunit protein bS20.